A 189-amino-acid chain; its full sequence is Glycerol-3-phosphate acyltransferase (189 aa).

Transmembrane regions (helical) follow at residues 1 to 21 (MFWL…AILL), 51 to 71 (LAIL…LIAS), 77 to 97 (LQDQ…PLYF), 111 to 131 (MLLG…LLTF), and 151 to 171 (LLAW…LLIV).

It belongs to the PlsY family. As to quaternary structure, probably interacts with PlsX.

Its subcellular location is the cell inner membrane. The enzyme catalyses an acyl phosphate + sn-glycerol 3-phosphate = a 1-acyl-sn-glycero-3-phosphate + phosphate. It participates in lipid metabolism; phospholipid metabolism. Its function is as follows. Catalyzes the transfer of an acyl group from acyl-phosphate (acyl-PO(4)) to glycerol-3-phosphate (G3P) to form lysophosphatidic acid (LPA). This enzyme utilizes acyl-phosphate as fatty acyl donor, but not acyl-CoA or acyl-ACP. This is Glycerol-3-phosphate acyltransferase from Pseudomonas fluorescens (strain Pf0-1).